The following is a 196-amino-acid chain: DnaA initiator-associating protein DiaA (196 aa).

The SIS domain maps to 34-196 (MVQSLLNGNK…DNTLFPHQND (163 aa)).

Belongs to the SIS family. DiaA subfamily. Homotetramer; dimer of dimers.

Required for the timely initiation of chromosomal replication via direct interactions with the DnaA initiator protein. This Pectobacterium atrosepticum (strain SCRI 1043 / ATCC BAA-672) (Erwinia carotovora subsp. atroseptica) protein is DnaA initiator-associating protein DiaA.